Reading from the N-terminus, the 308-residue chain is D-alanine--D-alanine ligase (308 aa).

The region spanning 104–301 (KQIWQGSDLP…FDELCVAILD (198 aa)) is the ATP-grasp domain. 130 to 185 (IAELGLPVIIKPVHEGSSVGMSKVEKAEDFAAAIEKATQHDAVVMAEKWITGREFT) is a binding site for ATP. 3 residues coordinate Mg(2+): D255, E268, and N270.

This sequence belongs to the D-alanine--D-alanine ligase family. Mg(2+) serves as cofactor. The cofactor is Mn(2+).

The protein resides in the cytoplasm. The catalysed reaction is 2 D-alanine + ATP = D-alanyl-D-alanine + ADP + phosphate + H(+). It functions in the pathway cell wall biogenesis; peptidoglycan biosynthesis. Functionally, cell wall formation. In Acinetobacter baumannii (strain AB307-0294), this protein is D-alanine--D-alanine ligase.